The primary structure comprises 187 residues: Threonylcarbamoyl-AMP synthase (187 aa).

A YrdC-like domain is found at 4–187 (ILTLDNAVAT…DARSGQILRD (184 aa)).

This sequence belongs to the SUA5 family. TsaC subfamily.

The protein localises to the cytoplasm. It catalyses the reaction L-threonine + hydrogencarbonate + ATP = L-threonylcarbamoyladenylate + diphosphate + H2O. Functionally, required for the formation of a threonylcarbamoyl group on adenosine at position 37 (t(6)A37) in tRNAs that read codons beginning with adenine. Catalyzes the conversion of L-threonine, HCO(3)(-)/CO(2) and ATP to give threonylcarbamoyl-AMP (TC-AMP) as the acyladenylate intermediate, with the release of diphosphate. This is Threonylcarbamoyl-AMP synthase from Xanthomonas oryzae pv. oryzae (strain MAFF 311018).